Reading from the N-terminus, the 548-residue chain is ATP synthase subunit alpha, mitochondrial (548 aa).

209–216 (GDRQTGKT) lines the ATP pocket.

The protein belongs to the ATPase alpha/beta chains family. In terms of assembly, F-type ATPases have 2 components, CF(1) - the catalytic core - and CF(0) - the membrane proton channel. CF(1) has five subunits: alpha(3), beta(3), gamma(1), delta(1), epsilon(1). CF(0) has three main subunits: a, b and c.

It is found in the mitochondrion. The protein localises to the mitochondrion inner membrane. Functionally, mitochondrial membrane ATP synthase (F(1)F(0) ATP synthase or Complex V) produces ATP from ADP in the presence of a proton gradient across the membrane which is generated by electron transport complexes of the respiratory chain. F-type ATPases consist of two structural domains, F(1) - containing the extramembraneous catalytic core, and F(0) - containing the membrane proton channel, linked together by a central stalk and a peripheral stalk. During catalysis, ATP synthesis in the catalytic domain of F(1) is coupled via a rotary mechanism of the central stalk subunits to proton translocation. Subunits alpha and beta form the catalytic core in F(1). Rotation of the central stalk against the surrounding alpha(3)beta(3) subunits leads to hydrolysis of ATP in three separate catalytic sites on the beta subunits. Subunit alpha does not bear the catalytic high-affinity ATP-binding sites. The chain is ATP synthase subunit alpha, mitochondrial (ATP1) from Kluyveromyces lactis (strain ATCC 8585 / CBS 2359 / DSM 70799 / NBRC 1267 / NRRL Y-1140 / WM37) (Yeast).